Consider the following 383-residue polypeptide: Succinyl-diaminopimelate desuccinylase (383 aa).

H73 provides a ligand contact to Zn(2+). Residue D75 is part of the active site. D107 is a Zn(2+) binding site. Catalysis depends on E141, which acts as the Proton acceptor. Zn(2+) contacts are provided by E142, E170, and H356.

It belongs to the peptidase M20A family. DapE subfamily. As to quaternary structure, homodimer. Requires Zn(2+) as cofactor. The cofactor is Co(2+).

The catalysed reaction is N-succinyl-(2S,6S)-2,6-diaminopimelate + H2O = (2S,6S)-2,6-diaminopimelate + succinate. Its pathway is amino-acid biosynthesis; L-lysine biosynthesis via DAP pathway; LL-2,6-diaminopimelate from (S)-tetrahydrodipicolinate (succinylase route): step 3/3. In terms of biological role, catalyzes the hydrolysis of N-succinyl-L,L-diaminopimelic acid (SDAP), forming succinate and LL-2,6-diaminopimelate (DAP), an intermediate involved in the bacterial biosynthesis of lysine and meso-diaminopimelic acid, an essential component of bacterial cell walls. This is Succinyl-diaminopimelate desuccinylase from Pseudomonas paraeruginosa (strain DSM 24068 / PA7) (Pseudomonas aeruginosa (strain PA7)).